A 538-amino-acid polypeptide reads, in one-letter code: MVVVSQNYPTPDLHRVRRALLSVFDKTGLVEFAQELHAYGIELISTGGTSESLIAAGLPVKDVSEVTGFPQIMDGRVKTLHPLIHGGLLGVRDDPSHKAAMEKHGICGIDLVVVNLYPFEKTWQSGADSQTIIENIDIGGPAMIRAAAKNHAYTGVVTAVSDYDVVLAELKQHNGCLSFSLRRQLAARAYEHTAAYDAAIAAWFAQDLEVEMPSWQNFSGHFESMMRYGENPHQRAAFYRTRDTRFGVATAKVLQGKELSYNNMNDADAAFELVAEFDPQRTAAVALIKHANPCGVAEGQSLKEAYLKALMCDSVSAFGGIVALNQPLDEECAAEIVKLFTEVIIAPDATEAACNIIAQKKNLRLLITGGVPDPRCGGLTVKTLAGGVLVQSRDNAVVDDFDLQIVTKRAPSQDEMRDLQFAFRVVKHVKSNAIVYAKNSATVGIGAGQMSRLDSARIAVHKAEDNAKRMGLTESLTRGSVVASDAFFPFADGLISAAEAGVTAVIQPGGSIRDQEVIEAADARGLAMVFTGVRHFRH.

Positions 11-158 (PDLHRVRRAL…KNHAYTGVVT (148 aa)) constitute an MGS-like domain.

The protein belongs to the PurH family.

It carries out the reaction (6R)-10-formyltetrahydrofolate + 5-amino-1-(5-phospho-beta-D-ribosyl)imidazole-4-carboxamide = 5-formamido-1-(5-phospho-D-ribosyl)imidazole-4-carboxamide + (6S)-5,6,7,8-tetrahydrofolate. The catalysed reaction is IMP + H2O = 5-formamido-1-(5-phospho-D-ribosyl)imidazole-4-carboxamide. It functions in the pathway purine metabolism; IMP biosynthesis via de novo pathway; 5-formamido-1-(5-phospho-D-ribosyl)imidazole-4-carboxamide from 5-amino-1-(5-phospho-D-ribosyl)imidazole-4-carboxamide (10-formyl THF route): step 1/1. It participates in purine metabolism; IMP biosynthesis via de novo pathway; IMP from 5-formamido-1-(5-phospho-D-ribosyl)imidazole-4-carboxamide: step 1/1. This is Bifunctional purine biosynthesis protein PurH from Bartonella bacilliformis (strain ATCC 35685 / KC583 / Herrer 020/F12,63).